A 275-amino-acid polypeptide reads, in one-letter code: MNYHVMTLFPDMIHQAMNTSIIGRAMEKGLLTINAIDIREFSEDKHRRVDDYPYGGGAGMVMAPGPVYRTYEHVMKMIDHNKEMLAQDKTMKIPEESVSERKNETRRPRVIYLTPQGKVFHQKMAEEFAKEDDLVFLCGHYEGIDERVLDQIVTDYVSIGDYILTGGELPVMVMMDAISRLIPGVLNNNASAEFESLQDNLLEYPQYTRPEVFMEQKVPDVLLSGHHANIEKWRREQSIIRTLKNRPELLEEAVLSKKEKQFLEQLRLGEDSKNV.

S-adenosyl-L-methionine-binding positions include G139 and 159 to 164 (IGDYIL).

It belongs to the RNA methyltransferase TrmD family. In terms of assembly, homodimer.

It is found in the cytoplasm. It carries out the reaction guanosine(37) in tRNA + S-adenosyl-L-methionine = N(1)-methylguanosine(37) in tRNA + S-adenosyl-L-homocysteine + H(+). In terms of biological role, specifically methylates guanosine-37 in various tRNAs. This is tRNA (guanine-N(1)-)-methyltransferase from Lachnoclostridium phytofermentans (strain ATCC 700394 / DSM 18823 / ISDg) (Clostridium phytofermentans).